Here is a 92-residue protein sequence, read N- to C-terminus: Probable Fe(2+)-trafficking protein (92 aa).

Belongs to the Fe(2+)-trafficking protein family.

Could be a mediator in iron transactions between iron acquisition and iron-requiring processes, such as synthesis and/or repair of Fe-S clusters in biosynthetic enzymes. The polypeptide is Probable Fe(2+)-trafficking protein (Shewanella frigidimarina (strain NCIMB 400)).